The chain runs to 124 residues: Large ribosomal subunit protein bL12 (124 aa).

The protein belongs to the bacterial ribosomal protein bL12 family. As to quaternary structure, homodimer. Part of the ribosomal stalk of the 50S ribosomal subunit. Forms a multimeric L10(L12)X complex, where L10 forms an elongated spine to which 2 to 4 L12 dimers bind in a sequential fashion. Binds GTP-bound translation factors.

Functionally, forms part of the ribosomal stalk which helps the ribosome interact with GTP-bound translation factors. Is thus essential for accurate translation. The polypeptide is Large ribosomal subunit protein bL12 (Jannaschia sp. (strain CCS1)).